A 127-amino-acid polypeptide reads, in one-letter code: Putative iron-sulfur cluster insertion protein ErpA (127 aa).

A compositionally biased stretch (polar residues) spans 1–14 (MNTPFNDGSGQTDP). Residues 1 to 20 (MNTPFNDGSGQTDPMTDIPT) are disordered. 3 residues coordinate iron-sulfur cluster: C55, C119, and C121.

Belongs to the HesB/IscA family. Homodimer. It depends on iron-sulfur cluster as a cofactor.

In terms of biological role, required for insertion of 4Fe-4S clusters. This chain is Putative iron-sulfur cluster insertion protein ErpA, found in Nitrosospira multiformis (strain ATCC 25196 / NCIMB 11849 / C 71).